Here is a 564-residue protein sequence, read N- to C-terminus: Benomyl/methotrexate resistance protein (564 aa).

Residues 60–101 (IDNQGEPNSSQSSSSNNTIVDNNNNNNNDVDGDKIVVTWDGD) are disordered. A compositionally biased stretch (low complexity) spans 67-88 (NSSQSSSSNNTIVDNNNNNNND). The next 12 helical transmembrane spans lie at 116 to 136 (AFFI…SAVY), 153 to 173 (VATL…LVFS), 184 to 204 (TSIY…TALV), 210 to 229 (LCIL…ATGG), 241 to 262 (LPVG…GPFF), 274 to 294 (WTFW…CFTL), 358 to 374 (IYIA…FEVF), 393 to 411 (YMSI…IPVI), 431 to 451 (IPIA…FGWS), 457 to 476 (HWVG…FLIF), 489 to 506 (PHYI…RSVI), and 530 to 551 (WGSS…LFYL).

It belongs to the major facilitator superfamily. CAR1 family.

The protein localises to the membrane. Probable transporter. Confers resistance to benomyl and methotrexate. This chain is Benomyl/methotrexate resistance protein (MDR1), found in Candida albicans (Yeast).